A 142-amino-acid polypeptide reads, in one-letter code: Deoxyuridine 5'-triphosphate nucleotidohydrolase (142 aa).

Residues Arg-62–Gly-64, Asn-75, and Thr-79–Asp-81 each bind substrate.

This sequence belongs to the dUTPase family. Requires Mg(2+) as cofactor.

The catalysed reaction is dUTP + H2O = dUMP + diphosphate + H(+). It functions in the pathway pyrimidine metabolism; dUMP biosynthesis; dUMP from dCTP (dUTP route): step 2/2. This enzyme is involved in nucleotide metabolism: it produces dUMP, the immediate precursor of thymidine nucleotides and it decreases the intracellular concentration of dUTP so that uracil cannot be incorporated into DNA. In Clostridium novyi (strain NT), this protein is Deoxyuridine 5'-triphosphate nucleotidohydrolase.